Here is a 281-residue protein sequence, read N- to C-terminus: 2,3,4,5-tetrahydropyridine-2,6-dicarboxylate N-succinyltransferase (281 aa).

This sequence belongs to the transferase hexapeptide repeat family.

The protein resides in the cytoplasm. It carries out the reaction (S)-2,3,4,5-tetrahydrodipicolinate + succinyl-CoA + H2O = (S)-2-succinylamino-6-oxoheptanedioate + CoA. Its pathway is amino-acid biosynthesis; L-lysine biosynthesis via DAP pathway; LL-2,6-diaminopimelate from (S)-tetrahydrodipicolinate (succinylase route): step 1/3. This chain is 2,3,4,5-tetrahydropyridine-2,6-dicarboxylate N-succinyltransferase, found in Methylobacterium sp. (strain 4-46).